The sequence spans 1119 residues: G8 domain-containing protein DDB_G0288475 (1119 aa).

The first 22 residues, 1-22 (MKYSSFLLLFIYIFFILNNINA), serve as a signal peptide directing secretion. The region spanning 276–404 (TIWTSGVVPL…YHNTWTKLAA (129 aa)) is the G8 domain. N-linked (GlcNAc...) asparagine glycans are attached at residues asparagine 308, asparagine 559, asparagine 736, asparagine 854, asparagine 968, asparagine 1035, asparagine 1056, and asparagine 1070.

Belongs to the comF family.

The protein localises to the secreted. The protein is G8 domain-containing protein DDB_G0288475 of Dictyostelium discoideum (Social amoeba).